Here is a 168-residue protein sequence, read N- to C-terminus: RNA pyrophosphohydrolase (168 aa).

The region spanning Pro8 to Arg160 is the Nudix hydrolase domain. Residues Gly47 to Ser68 carry the Nudix box motif.

This sequence belongs to the Nudix hydrolase family. RppH subfamily. It depends on a divalent metal cation as a cofactor.

Its function is as follows. Accelerates the degradation of transcripts by removing pyrophosphate from the 5'-end of triphosphorylated RNA, leading to a more labile monophosphorylated state that can stimulate subsequent ribonuclease cleavage. The chain is RNA pyrophosphohydrolase from Azorhizobium caulinodans (strain ATCC 43989 / DSM 5975 / JCM 20966 / LMG 6465 / NBRC 14845 / NCIMB 13405 / ORS 571).